A 259-amino-acid polypeptide reads, in one-letter code: Ribonuclease PH (259 aa).

Phosphate is bound by residues Arg88 and 126-128 (GTR).

This sequence belongs to the RNase PH family. Homohexameric ring arranged as a trimer of dimers.

The catalysed reaction is tRNA(n+1) + phosphate = tRNA(n) + a ribonucleoside 5'-diphosphate. In terms of biological role, phosphorolytic 3'-5' exoribonuclease that plays an important role in tRNA 3'-end maturation. Removes nucleotide residues following the 3'-CCA terminus of tRNAs; can also add nucleotides to the ends of RNA molecules by using nucleoside diphosphates as substrates, but this may not be physiologically important. Probably plays a role in initiation of 16S rRNA degradation (leading to ribosome degradation) during starvation. This is Ribonuclease PH from Mycobacterium bovis (strain ATCC BAA-935 / AF2122/97).